The chain runs to 364 residues: Geissoschizine synthase (364 aa).

Residue C51 coordinates Zn(2+). N52 contacts NADP(+). Zn(2+) contacts are provided by H73, E74, C104, C107, C110, C118, and C168. NADP(+) contacts are provided by L194, G196, L197, S216, T217, S218, K221, R261, V280, A282, S304, T306, and R351.

It belongs to the zinc-containing alcohol dehydrogenase family. Class-III subfamily. In terms of assembly, homodimer. The cofactor is Zn(2+). Expressed in leaf epidermis.

It catalyses the reaction (19E)-geissoschizine + NADP(+) = 4,21-dehydrogeissoschizine + NADPH. Its pathway is alkaloid biosynthesis. Its function is as follows. Component of the seco-iridoid and derivatives monoterpenoid indole alkaloids (MIAs, e.g. catharanthine, tabersonine, vincadifformine, vindoline, vincristine, quinine and strychnine) biosynthesis pathway. During the conversion of strictosidine aglycone to geissoschizine, catalyzes iminium reduction on 4,21-dehydrogeissoschizine to produce 19E-geissoschizine, precursor of catharanthine and tabersonine derivatives. May also trigger the production of reactive intermediate used by the HL1, HL2, HL3 and HL4 to form catharanthine, vincadifformine and tabersonine. The chain is Geissoschizine synthase from Catharanthus roseus (Madagascar periwinkle).